Consider the following 350-residue polypeptide: MRPIKLMGHERSLTQVKYNREGDLLFSVAKDNAASIWYSSNGERLGTLEGHQGVIWSIDVDPETHLCATGGGDLAIKLWKVENGQCVYTWDSPSPVRRVAFSPDGKKLLAIADQVMGHIGTVSVFDINDDDATLSQQKAEPSLVIETKSEGSKATVAGWSGDGDYIIVGHDNGYVSKYDSKTGKLVTSLQAHGIHNEEKNVSITDIQFAPEDRSYFITSSKDKTATLIDVDTFEILKVYKADAPMNTAAITPVKDFVILGGGQEARNVTTTAESQGKFEARFYHKIFEEEIGRVKGHFGPLNTVAVHPDGTGYSSGGEDGFIRVHTFDKSYQDFLFDAERTERAAAAGTI.

WD repeat units lie at residues 8–49, 51–89, 91–135, 149–188, 198–240, and 296–335; these read GHER…GTLE, HQGVIWSIDVDPETHLCATGGGDLAIKLWKVENGQCVYT, DSPS…ATLS, SEGSKATVAGWSGDGDYIIVGHDNGYVSKYDSKTGKLVTS, EKNV…KVYK, and GHFGPLNTVAVHPDGTGYSSGGEDGFIRVHTFDKSYQDFL.

Belongs to the eIF-3 subunit I family. As to quaternary structure, component of the eukaryotic translation initiation factor 3 (eIF-3) complex.

Its subcellular location is the cytoplasm. In terms of biological role, component of the eukaryotic translation initiation factor 3 (eIF-3) complex, which is involved in protein synthesis of a specialized repertoire of mRNAs and, together with other initiation factors, stimulates binding of mRNA and methionyl-tRNAi to the 40S ribosome. The eIF-3 complex specifically targets and initiates translation of a subset of mRNAs involved in cell proliferation. This Candida albicans (strain SC5314 / ATCC MYA-2876) (Yeast) protein is Eukaryotic translation initiation factor 3 subunit I.